The following is a 58-amino-acid chain: Large ribosomal subunit protein uL30 (58 aa).

It belongs to the universal ribosomal protein uL30 family. As to quaternary structure, part of the 50S ribosomal subunit.

The protein is Large ribosomal subunit protein uL30 of Pseudomonas entomophila (strain L48).